The following is a 668-amino-acid chain: Ecdysone oxidase (668 aa).

Residues 137-140 (NHMV), Val-270, and 536-537 (WH) contribute to the FAD site. The Proton acceptor role is filled by His-537.

Belongs to the GMC oxidoreductase family. FAD is required as a cofactor.

The catalysed reaction is ecdysone + O2 = 3-dehydroecdysone + H2O2. Functionally, involved in the inactivation of ecdysteroid molting hormones by converting ecdysteroids into 3-dehydroecdysteroids. The sequence is that of Ecdysone oxidase from Bombyx mori (Silk moth).